Consider the following 377-residue polypeptide: Dihydroorotate dehydrogenase (quinone) (377 aa).

Residues 78 to 82 (AGCDK) and Ala-102 contribute to the FMN site. Lys-82 is a substrate binding site. 127–130 (NRLG) contacts substrate. FMN contacts are provided by Asn-159 and Asn-192. Asn-192 contacts substrate. Ser-195 acts as the Nucleophile in catalysis. Residue Asn-197 participates in substrate binding. Positions 230 and 258 each coordinate FMN. 259–260 (NT) serves as a coordination point for substrate. FMN is bound by residues Gly-288, Gly-317, and 338 to 339 (YT).

The protein belongs to the dihydroorotate dehydrogenase family. Type 2 subfamily. In terms of assembly, monomer. FMN is required as a cofactor.

The protein localises to the cell membrane. The catalysed reaction is (S)-dihydroorotate + a quinone = orotate + a quinol. It functions in the pathway pyrimidine metabolism; UMP biosynthesis via de novo pathway; orotate from (S)-dihydroorotate (quinone route): step 1/1. Functionally, catalyzes the conversion of dihydroorotate to orotate with quinone as electron acceptor. This is Dihydroorotate dehydrogenase (quinone) from Rippkaea orientalis (strain PCC 8801 / RF-1) (Cyanothece sp. (strain PCC 8801)).